Reading from the N-terminus, the 610-residue chain is UvrABC system protein C (610 aa).

One can recognise a GIY-YIG domain in the interval 16-94; that stretch reads SQPGVYRMYD…IKLYQPRYNV (79 aa). The region spanning 204–239 is the UVR domain; sequence DQVLTQLIARMEKASQDLAFEEAARIRDQIQAVRRV.

It belongs to the UvrC family. As to quaternary structure, interacts with UvrB in an incision complex.

The protein resides in the cytoplasm. Functionally, the UvrABC repair system catalyzes the recognition and processing of DNA lesions. UvrC both incises the 5' and 3' sides of the lesion. The N-terminal half is responsible for the 3' incision and the C-terminal half is responsible for the 5' incision. This chain is UvrABC system protein C, found in Salmonella gallinarum (strain 287/91 / NCTC 13346).